A 164-amino-acid chain; its full sequence is MANSVMATEQLCYIPCNFCNIILAVNVPCSSLFDIVTVRCGHCTNLWSVNMAAALQSLSRPNFQATNYAVPEYGSSSRSHTKIPSRISTRTITEQRIVNRPPEKRQRVPSAYNQFIKEEIQRIKANNPDISHREAFSTAAKNWAHFPHIHFGLMLESNKQAKIA.

The segment at 16–43 (CNFCNIILAVNVPCSSLFDIVTVRCGHC) adopts a C4-type zinc-finger fold.

Belongs to the YABBY family. Binds to LUG and LUH; these complexes promote adaxial cell identity in leaves as well as embryonic shoot apical meristem (SAM) initiation and postembryonic SAM maintenance. Interacts with SPL/NZZ and SPEAR2.

The protein localises to the nucleus. Its function is as follows. Promotes adaxial cell identity. Regulates the initiation of embryonic shoot apical meristem (SAM) development. This is Axial regulator YABBY 5 (YAB5) from Arabidopsis thaliana (Mouse-ear cress).